Reading from the N-terminus, the 166-residue chain is Large ribosomal subunit protein uL10 (166 aa).

It belongs to the universal ribosomal protein uL10 family. In terms of assembly, part of the ribosomal stalk of the 50S ribosomal subunit. The N-terminus interacts with L11 and the large rRNA to form the base of the stalk. The C-terminus forms an elongated spine to which L12 dimers bind in a sequential fashion forming a multimeric L10(L12)X complex.

Forms part of the ribosomal stalk, playing a central role in the interaction of the ribosome with GTP-bound translation factors. This chain is Large ribosomal subunit protein uL10, found in Staphylococcus aureus (strain JH1).